A 472-amino-acid polypeptide reads, in one-letter code: Carboxypeptidase Q (472 aa).

An N-terminal signal peptide occupies residues 1–20; sequence MRFLFFLFVAVVHLFSLGSG. Positions 21–44 are excised as a propeptide; sequence KAIYKSGVSQRTFQEIKEEIANYE. N-linked (GlcNAc...) asparagine glycosylation is present at Asn-61. Positions 290 and 302 each coordinate Zn(2+). Residue Glu-336 is the Nucleophile of the active site. A Zn(2+)-binding site is contributed by Glu-337. N-linked (GlcNAc...) asparagine glycosylation occurs at Asn-353. Position 364 (Asp-364) interacts with Zn(2+). Asn-396 carries N-linked (GlcNAc...) asparagine glycosylation. His-434 is a binding site for Zn(2+).

Belongs to the peptidase M28 family. As to quaternary structure, homodimer. The monomeric form is inactive while the homodimer is active. In terms of processing, N-glycosylated. The secreted form is modified by hybrid or complex type oligosaccharide chains.

The protein resides in the endoplasmic reticulum. It is found in the golgi apparatus. The protein localises to the lysosome. It localises to the secreted. Its function is as follows. Carboxypeptidase that may play an important role in the hydrolysis of circulating peptides. Catalyzes the hydrolysis of dipeptides with unsubstituted terminals into amino acids. May play a role in the liberation of thyroxine hormone from its thyroglobulin (Tg) precursor. This chain is Carboxypeptidase Q (Cpq), found in Rattus norvegicus (Rat).